The following is a 735-amino-acid chain: Lebercilin-like protein (735 aa).

Disordered regions lie at residues 12–54 (TEAH…NGSV) and 91–115 (EKPL…RGQK). Residues 43 to 53 (QSQNSQASNGS) show a composition bias toward low complexity. Residues 205–335 (TAKHQNEVKN…QQKLKEKDRE (131 aa)) are a coiled coil. Disordered regions lie at residues 356 to 379 (YPKV…NMRH), 473 to 597 (SKEV…PRKH), 632 to 657 (KHRS…AGAR), and 685 to 735 (GRAG…KTVV). A compositionally biased stretch (basic and acidic residues) spans 487 to 525 (TPRRPKENKEDQEKRAIPAEAEPTAKESEAHKDAEDKAL). Positions 528 to 541 (AAGNAGDAGDAGDA) are enriched in low complexity. Composition is skewed to basic and acidic residues over residues 542–553 (GNDREVVGEHKV), 573–588 (EVHG…EPGR), and 632–641 (KHRSEQELRL). The segment covering 689–707 (SSDSEAVSKSPQTGPQASA) has biased composition (polar residues).

The protein belongs to the LCA5 family.

The protein is Lebercilin-like protein of Mus musculus (Mouse).